The sequence spans 286 residues: Outer kinetochore KNL1 complex subunit ZWINT (286 aa).

Residues 85–211 (SRQKALEAKE…EKDKLQRHQT (127 aa)) are a coiled coil. The segment at 230–286 (AEIPQELDLPKDKLQQVTQPQEQNTQDTMGREADNPQPVGDAGLPWLPGRQQHKEES) is disordered. The span at 244–255 (QQVTQPQEQNTQ) shows a compositional bias: low complexity.

As to quaternary structure, component of the KNL1 complex composed of KNL1 and ZWINT. Part of the ten-subunit outer kinetochore KMN network that includes the KNL1, MIS12 and NDC80 complexes; a bioriented kinetochore contains approximately 150 copies of the network. Interacts with the MIS12 complex subunits MIS12 DSN1, and PMF1. Interacts with the NDC80 complex subunit NDC80 during mitosis. Interacts with ZW10. Interacts with CETN3.

It localises to the nucleus. The protein resides in the chromosome. It is found in the centromere. Its subcellular location is the kinetochore. Acts as a component of the outer kinetochore KNL1 complex that serves as a docking point for spindle assembly checkpoint components and mediates microtubule-kinetochore interactions. Kinetochores, consisting of a centromere-associated inner segment and a microtubule-contacting outer segment, play a crucial role in chromosome segregation by mediating the physical connection between centromeric DNA and spindle microtubules. The outer kinetochore is made up of the ten-subunit KMN network, comprising the MIS12, NDC80 and KNL1 complexes, and auxiliary microtubule-associated components; together they connect the outer kinetochore with the inner kinetochore, bind microtubules, and mediate interactions with mitotic checkpoint proteins that delay anaphase until chromosomes are bioriented on the spindle. Targets the RZZ complex to the kinetochore at prometaphase. Recruits MAD2L1 to the kinetochore, but is not required for BUB1B localization. In addition to orienting mitotic chromosomes, it is also essential for alignment of homologous chromosomes during meiotic metaphase I. In meiosis I, required to activate the spindle assembly checkpoint at unattached kinetochores to correct erroneous kinetochore-microtubule attachments. This chain is Outer kinetochore KNL1 complex subunit ZWINT (ZWINT), found in Bos taurus (Bovine).